The following is a 227-amino-acid chain: A-type potassium channel modulatory protein KCNIP1 (227 aa).

An EF-hand 1; degenerate domain is found at 38 to 94 (LEMTMVCHRPEGLEQLEAQTNFTKRELQVLYRGFKNECPSGVVNEETFKQIYAQFFP). 3 EF-hand domains span residues 97–132 (DAST…LLRG), 133–168 (TVHE…IYDM), and 181–216 (TPRQ…DDNI). The Ca(2+) site is built by Asp146, Asn148, Asp150, Tyr152, Glu157, Asp194, Asn196, Asp198, and Glu205. An interaction with KCND2 region spans residues 214–227 (DNIMRSLQLFQNVM).

This sequence belongs to the recoverin family. As to quaternary structure, component of heteromultimeric potassium channels. Identified in potassium channel complexes containing KCND1, KCND2, KCND3, KCNIP1, KCNIP2, KCNIP3, KCNIP4, DPP6 and DPP10. Part of a heterooctamer composed of the tetrameric channel and four KCNIP1 chains. Probably part of a complex consisting of KCNIP1, KCNIP2 isoform 3 and KCND2. Self-associates to form homodimers and homotetramers. Interacts with KCNIP2 isoform 3 in a calcium-dependent manner. Interacts with KCND2; this interaction mediates the capture of both the N- and C-terminus of KCND2, thus preventing KCND2 N-type inactivation and modulates the channel gating kinetics. Interacts with KCND3; each KCNIP1 monomer interacts with two adjacent KCND3 subunits, through both the N-terminal inactivation ball of a KCND3 subunit and a C-terminal helix from the adjacent KCND3 subunit, clamping them together; this interaction stabilizes the tetrameric form and modulates the channel gating kinetics namely channel activation and inactivation kinetics and rate of recovery from inactivation. As to expression, detected in hippocampus and in the molecular layer of the dentate gyrus (at protein level). Isoform 1 and isoform 2 are predominantly expressed at equal levels in brain. Colocalizes with KCND3 in inhibitory interneurons in cortex and hippocampus and in striatal interneurons.

The protein localises to the cell membrane. Its subcellular location is the cytoplasm. The protein resides in the cell projection. It localises to the dendrite. In terms of biological role, regulatory subunit of Kv4/D (Shal)-type voltage-gated rapidly inactivating A-type potassium channels. Regulates channel density, inactivation kinetics and rate of recovery from inactivation in a calcium-dependent and isoform-specific manner. Modulates KCND2/Kv4.2 currents. In vitro, modulates KCND1/Kv4.1 currents. Increases the presence of KCND2 at the cell surface. This chain is A-type potassium channel modulatory protein KCNIP1, found in Rattus norvegicus (Rat).